A 530-amino-acid polypeptide reads, in one-letter code: Vesicular acetylcholine transporter (530 aa).

The Cytoplasmic portion of the chain corresponds to 1 to 33 (MEPTAPTGQARAAATKLSEAVGAALQEPQRQRR). Residues 34–54 (LVLVIVCVALLLDNMLYMVIV) form a helical membrane-spanning segment. Residues 55 to 125 (PIVPDYIAHM…PTESEDVKIG (71 aa)) lie on the Lumenal, vesicle side of the membrane. Asn89 and Asn96 each carry an N-linked (GlcNAc...) asparagine glycan. The chain crosses the membrane as a helical span at residues 126-146 (VLFASKAILQLLVNPLSGPFI). Topologically, residues 147-152 (DRMSYD) are cytoplasmic. Residues 153 to 173 (VPLLIGLGVMFASTVMFAFAE) form a helical membrane-spanning segment. Over 174 to 182 (DYATFFAAR) the chain is Lumenal, vesicle. The chain crosses the membrane as a helical span at residues 183 to 203 (SLQGLGSAFADTSGIAMIADK). Residues 204–213 (YPEEPERSRA) are Cytoplasmic-facing. The chain crosses the membrane as a helical span at residues 214 to 234 (LGVALAFISFGSLVAPPFGGI). At 235–242 (LYEFAGKR) the chain is on the lumenal, vesicle side. Residues 243 to 263 (VPFLVLAAVSLFDALLLLAVA) form a helical membrane-spanning segment. Residues 264–288 (KPFSAAARARANLPVGTPIHRLMLD) are Cytoplasmic-facing. The helical transmembrane segment at 289 to 309 (PYIAVVAGALTTCNIPLAFLE) threads the bilayer. The Lumenal, vesicle segment spans residues 310–325 (PTIATWMKHTMAASEW). A helical membrane pass occupies residues 326-346 (EMGMVWLPAFVPHVLGVYLTV). Over 347–356 (RLAARYPHLQ) the chain is Cytoplasmic. A helical transmembrane segment spans residues 357–377 (WLYGALGLAVIGVSSCVVPAC). Residues 378–388 (RSFAPLVVSLC) are Lumenal, vesicle-facing. The chain crosses the membrane as a helical span at residues 389–409 (GLCFGIALVDTALLPTLAFLV). Topologically, residues 410-422 (DVRHVSVYGSVYA) are cytoplasmic. A helical membrane pass occupies residues 423–443 (IADISYSVAYALGPIVAGHIV). Residues 444–447 (HSLG) lie on the Lumenal, vesicle side of the membrane. A helical transmembrane segment spans residues 448 to 468 (FEQLSLGMGLANLLYAPVLLL). Over 469–530 (LRNVGLLTRS…EDDYNYYSRS (62 aa)) the chain is Cytoplasmic. The interval 471-530 (NVGLLTRSRSERDVLLDEPPQGLYDAVRLREVQGKDGGEPCSPPGPFDGCEDDYNYYSRS) is mediates interaction with SEC14L1. Residues 504–530 (GKDGGEPCSPPGPFDGCEDDYNYYSRS) are disordered.

Belongs to the major facilitator superfamily. Vesicular transporter family. Interacts with SEC14L1. In terms of tissue distribution, expressed in the spinal cord, brain (excluding the cerebellum), brain stem and cholinergic tissues. Not expressed in peripheral tissues such as liver and kidney.

The protein resides in the cytoplasmic vesicle. It localises to the secretory vesicle. The protein localises to the synaptic vesicle membrane. The enzyme catalyses acetylcholine(out) + 2 H(+)(in) = acetylcholine(in) + 2 H(+)(out). The catalysed reaction is choline(in) + 2 H(+)(out) = choline(out) + 2 H(+)(in). It carries out the reaction serotonin(in) + 2 H(+)(out) = serotonin(out) + 2 H(+)(in). Functionally, electrogenic antiporter that exchanges one cholinergic neurotransmitter, acetylcholine or choline, with two intravesicular protons across the membrane of synaptic vesicles. Uses the electrochemical proton gradient established by the V-type proton-pump ATPase to store neurotransmitters inside the vesicles prior to their release via exocytosis. Determines cholinergic vesicular quantal size at presynaptic nerve terminals in developing neuro-muscular junctions with an impact on motor neuron differentiation and innervation pattern. Part of forebrain cholinergic system, regulates hippocampal synapse transmissions that underlie spatial memory formation. Can transport serotonin. In Mus musculus (Mouse), this protein is Vesicular acetylcholine transporter (Slc18a3).